Here is a 187-residue protein sequence, read N- to C-terminus: dITP/XTP pyrophosphatase (187 aa).

Substrate is bound at residue 7–12; the sequence is TNNPYK. Positions 36 and 65 each coordinate Mg(2+). Asp65 acts as the Proton acceptor in catalysis. Residues Thr66, 140–143, Lys163, and 168–169 contribute to the substrate site; these read FGYD and HR.

This sequence belongs to the HAM1 NTPase family. In terms of assembly, homodimer. Mg(2+) is required as a cofactor.

It carries out the reaction XTP + H2O = XMP + diphosphate + H(+). The enzyme catalyses dITP + H2O = dIMP + diphosphate + H(+). The catalysed reaction is ITP + H2O = IMP + diphosphate + H(+). In terms of biological role, pyrophosphatase that catalyzes the hydrolysis of nucleoside triphosphates to their monophosphate derivatives, with a high preference for the non-canonical purine nucleotides XTP (xanthosine triphosphate), dITP (deoxyinosine triphosphate) and ITP. Seems to function as a house-cleaning enzyme that removes non-canonical purine nucleotides from the nucleotide pool, thus preventing their incorporation into DNA/RNA and avoiding chromosomal lesions. This is dITP/XTP pyrophosphatase from Pyrobaculum aerophilum (strain ATCC 51768 / DSM 7523 / JCM 9630 / CIP 104966 / NBRC 100827 / IM2).